A 1587-amino-acid polypeptide reads, in one-letter code: Sister chromatid cohesion protein mis4 (1587 aa).

A disordered region spans residues 140 to 172; the sequence is PKEKPDASSINTNRSSSDNGFLTPSSSPRSPSC. Over residues 147–162 the composition is skewed to polar residues; that stretch reads SSINTNRSSSDNGFLT. Residues 163–172 show a composition bias toward low complexity; that stretch reads PSSSPRSPSC. The residue at position 183 (Ser-183) is a Phosphoserine. HEAT repeat units lie at residues 775 to 812, 814 to 851, 853 to 888, 890 to 927, 1101 to 1140, and 1183 to 1220; these read LNLK…IPSI, RTHP…AYRE, IPQI…ATED, NIRV…SPAS, ATLM…ARHS, and DAYV…RETS.

The protein belongs to the SCC2/Nipped-B family. As to quaternary structure, interacts with ssl3.

The protein localises to the nucleus. It is found in the chromosome. Its function is as follows. Plays a structural role in chromatin. Chromatid cohesion molecule required for equal sister chromatid separation in anaphase. May form a stable link between chromatids in S phase that is split rather than removed in anaphase. Also required for spindle-kinetochore interaction in early mitosis and inhibit sister chromatid separation until the cleavage of Rad21 in anaphase. The chain is Sister chromatid cohesion protein mis4 (mis4) from Schizosaccharomyces pombe (strain 972 / ATCC 24843) (Fission yeast).